Consider the following 204-residue polypeptide: Peroxynitrite isomerase (204 aa).

The short motif at 21 to 27 is the GXWXGXG element; the sequence is GEWEGSG. Heme b is bound at residue H195.

Belongs to the nitrobindin family. As to quaternary structure, homodimer. Heme b serves as cofactor.

The catalysed reaction is peroxynitrite = nitrate. It functions in the pathway nitrogen metabolism. Heme-binding protein able to scavenge peroxynitrite and to protect free L-tyrosine against peroxynitrite-mediated nitration, by acting as a peroxynitrite isomerase that converts peroxynitrite to nitrate. Therefore, this protein likely plays a role in peroxynitrite sensing and in the detoxification of reactive nitrogen and oxygen species (RNS and ROS, respectively). Is able to bind nitric oxide (NO) in vitro, but may act as a sensor of peroxynitrite levels in vivo. The sequence is that of Peroxynitrite isomerase from Arthrobacter sp. (strain FB24).